Reading from the N-terminus, the 87-residue chain is MKTFDELFAELQERARTRPEGSATVAALDAGVHAQGKKVIEEAGEVWIAAEYESDEALAEEISQLLYRLQVVMLGRGLSLEDVYRYL.

The protein belongs to the PRA-PH family.

It localises to the cytoplasm. The enzyme catalyses 1-(5-phospho-beta-D-ribosyl)-ATP + H2O = 1-(5-phospho-beta-D-ribosyl)-5'-AMP + diphosphate + H(+). It participates in amino-acid biosynthesis; L-histidine biosynthesis; L-histidine from 5-phospho-alpha-D-ribose 1-diphosphate: step 2/9. In Saccharopolyspora erythraea (strain ATCC 11635 / DSM 40517 / JCM 4748 / NBRC 13426 / NCIMB 8594 / NRRL 2338), this protein is Phosphoribosyl-ATP pyrophosphatase.